We begin with the raw amino-acid sequence, 445 residues long: Glucose-6-phosphate isomerase (445 aa).

Catalysis depends on Glu284, which acts as the Proton donor. Active-site residues include His305 and Lys419.

It belongs to the GPI family.

It localises to the cytoplasm. It carries out the reaction alpha-D-glucose 6-phosphate = beta-D-fructose 6-phosphate. The protein operates within carbohydrate biosynthesis; gluconeogenesis. It participates in carbohydrate degradation; glycolysis; D-glyceraldehyde 3-phosphate and glycerone phosphate from D-glucose: step 2/4. In terms of biological role, catalyzes the reversible isomerization of glucose-6-phosphate to fructose-6-phosphate. In Leptospira borgpetersenii serovar Hardjo-bovis (strain JB197), this protein is Glucose-6-phosphate isomerase.